Here is a 294-residue protein sequence, read N- to C-terminus: Negative regulator of the PHO system (294 aa).

In terms of domain architecture, Protein kinase spans 7–289 (FQQLEKLGEG…ARQSLEHPWF (283 aa)). ATP contacts are provided by residues 13–21 (LGEGTYATV) and lysine 36. Aspartate 130 functions as the Proton acceptor in the catalytic mechanism.

This sequence belongs to the protein kinase superfamily. CMGC Ser/Thr protein kinase family. CDC2/CDKX subfamily. In terms of assembly, interacts with a number of cyclins.

It carries out the reaction L-seryl-[protein] + ATP = O-phospho-L-seryl-[protein] + ADP + H(+). It catalyses the reaction L-threonyl-[protein] + ATP = O-phospho-L-threonyl-[protein] + ADP + H(+). In terms of biological role, when phosphate concentrations are high it phosphorylates the PHO4 transcription factor thus establishing repression. The polypeptide is Negative regulator of the PHO system (PHO85) (Yarrowia lipolytica (strain CLIB 122 / E 150) (Yeast)).